Here is an 817-residue protein sequence, read N- to C-terminus: Verprolin (817 aa).

Over residues 1–15 the composition is skewed to pro residues; sequence MAGAPAPPPPPPPPA. The disordered stretch occupies residues 1–752; that stretch reads MAGAPAPPPP…THTNQPDVDV (752 aa). Positions 30–47 constitute a WH2 1 domain; it reads GRDALLGDIRKGMKLKKA. A compositionally biased stretch (basic and acidic residues) spans 37–51; sequence DIRKGMKLKKAETND. The segment covering 62 to 79 has biased composition (low complexity); sequence VSSASGSSGTVSSKGPSM. One can recognise a WH2 2 domain in the interval 87–106; it reads MGAPQLGDILAGGIPKLKHI. The N-linked (GlcNAc...) asparagine glycan is linked to Asn109. Positions 119–180 are enriched in pro residues; sequence SAPPIPGAVP…VPSSPAPPLP (62 aa). Asn212 is a glycosylation site (N-linked (GlcNAc...) asparagine). Positions 236 to 245 are enriched in pro residues; sequence PQAPPPPPTP. A compositionally biased stretch (polar residues) spans 254-265; the sequence is IKPTDNAVSPPS. A compositionally biased stretch (pro residues) spans 306 to 335; sequence SQPPLPSSAPPIPTSHAPPLPPTAPPPPSL. Residues 336–348 are compositionally biased toward low complexity; it reads PNVTSAPKKATSA. Asn337 carries N-linked (GlcNAc...) asparagine glycosylation. The segment covering 372 to 382 has biased composition (pro residues); sequence PVPPTLAPPLP. A glycan (N-linked (GlcNAc...) asparagine) is linked at Asn383. A compositionally biased stretch (low complexity) spans 383 to 395; the sequence is NTTSVPPNKASSM. Over residues 396 to 407 the composition is skewed to pro residues; sequence PAPPPPPPPPPG. The span at 408–422 shows a compositional bias: low complexity; sequence AFSTSSALSASSIPL. Residues 423 to 432 are compositionally biased toward pro residues; that stretch reads APLPPPPPPS. Over residues 447 to 469 the composition is skewed to low complexity; that stretch reads LTTNKPSASSKQSKISSSSSSSA. A compositionally biased stretch (basic and acidic residues) spans 502-516; that stretch reads DKQEDVIGSSKDDNV. The span at 518 to 534 shows a compositional bias: low complexity; it reads PSPISPSINPPKQSSQN. Ser519 carries the phosphoserine modification. Over residues 557-579 the composition is skewed to pro residues; the sequence is APPPHTDAMAPPLPPSAPPPPIT. Over residues 588-597 the composition is skewed to basic and acidic residues; sequence GDDHTNDKSE. Positions 649–661 are enriched in pro residues; the sequence is PPSPPVAAAPPLP. Residues 713–737 show a composition bias toward polar residues; sequence MDTGTSNSPSKNLKQRLFSTGGSTL. Residue Ser762 is modified to Phosphoserine. Residues Asn784 and Asn796 are each glycosylated (N-linked (GlcNAc...) asparagine). The disordered stretch occupies residues 786-806; it reads SQMPKPRPFQNKTKLYPSGKG.

It belongs to the verprolin family. Post-translationally, N-glycosylated.

Its subcellular location is the cytoplasm. It localises to the cytoskeleton. In terms of biological role, involved in cytoskeletal organization and cellular growth. May exert its effects on the cytoskeleton directly, or indirectly via proline-binding proteins (e.g. profilin) or proteins possessing SH3 domains. The protein is Verprolin (VRP1) of Saccharomyces cerevisiae (strain ATCC 204508 / S288c) (Baker's yeast).